The following is a 583-amino-acid chain: MATILKQKLKTFFVPTAITLLLSACNSTSLFENSVTYLIKQEAYASSEFYINKAEQTLNSQDKITYQLLAVRKLIDENKVVEAQNTLNDLTTRLNIMEQNPLQQLEYQLVTAQLAALKGNNHQAEVTLQHISAANLSHSQLLRFYQTQAKIAENSKNTIEAVRIRSLIATQLVDNKLRQENNDKIWSLLRNANRGMLSSAQAGAGEMELAGWLALIEIYNQSVSTPAQMPQNINYWKRLYPNHSALAVMPTELQRVFNFQQTLLNNVALLLPLSGDAKILGEIIKKGFDDAKEQDPTIVQVFDTDSNSIENILMQAKQQGAQMIIGPLLKSRVNQMLASDQIRDINVLALNATQDVKPIVGVCYYGLSPEAEARSGADRLSRDGYTKAIVVAARDEFGQRSAEAFAQRWRQLTNTDADIRYYNQPLDVITTIQNSANNLQETALYALGNAEQLLEIKQGLENSTIAGQLAIYTASRSNSPNNGIEFRTAMEGVKFSEIPLLADHNSNEYQKAYSLADSDFSMMRLYAMGSDTWALANKFNEFRQIPGYSISGLTGNLNAGPNCNIERNMTWLQYHNGAVETTN.

An N-terminal signal peptide occupies residues Met-1–Ala-24. Cys-25 carries N-palmitoyl cysteine lipidation. Cys-25 is lipidated: S-diacylglycerol cysteine.

This sequence belongs to the LpoA family. As to quaternary structure, interacts with PBP1a.

It is found in the cell outer membrane. Functionally, regulator of peptidoglycan synthesis that is essential for the function of penicillin-binding protein 1A (PBP1a). This is Penicillin-binding protein activator LpoA from Haemophilus ducreyi (strain 35000HP / ATCC 700724).